The primary structure comprises 348 residues: GTPase Obg (348 aa).

In terms of domain architecture, Obg spans 1–159 (MKFLDQARIY…MTLWLRLKLI (159 aa)). Residues 160–327 (ADAGLVGLPN…TLQSLLAAID (168 aa)) enclose the OBG-type G domain. Residues 166-173 (GLPNAGKS), 191-195 (FTTLH), 212-215 (DIPG), 279-282 (SKID), and 308-310 (SAA) contribute to the GTP site. Positions 173 and 193 each coordinate Mg(2+).

This sequence belongs to the TRAFAC class OBG-HflX-like GTPase superfamily. OBG GTPase family. In terms of assembly, monomer. The cofactor is Mg(2+).

The protein resides in the cytoplasm. An essential GTPase which binds GTP, GDP and possibly (p)ppGpp with moderate affinity, with high nucleotide exchange rates and a fairly low GTP hydrolysis rate. Plays a role in control of the cell cycle, stress response, ribosome biogenesis and in those bacteria that undergo differentiation, in morphogenesis control. The protein is GTPase Obg of Beijerinckia indica subsp. indica (strain ATCC 9039 / DSM 1715 / NCIMB 8712).